We begin with the raw amino-acid sequence, 325 residues long: MSTFPTSTIVHPTVLLSVVDHYNRVAKDTNKRVVGALLGSNNKGVVDVSNCYGLPFEEDEANPNIWFLDHNFHENMFAMFKKINARENVVGWYSTGPKIRPADQDINELFRRYTPNPVMVIIDVAPKELGIPTKSYVTVEEINKDTSESTMRFQHIPSSIDAVEAEEICIEHLLRDVKDSSISSLTTQITDKKISLKHLLTNLQEMQHYLKLVCDGTLPPNHQIIGYIQDIINLSPNLNANEISKSFAVQNNDTMSVIYLSSMIRSIIALHNLIINKTANREAEKKADIINSTPPTTATSPSVADKGKEKEQNAFNGADKPSKQA.

Residues 8–142 enclose the MPN domain; the sequence is TIVHPTVLLS…TKSYVTVEEI (135 aa). The interval 285–325 is disordered; that stretch reads KKADIINSTPPTTATSPSVADKGKEKEQNAFNGADKPSKQA. Over residues 292 to 302 the composition is skewed to low complexity; that stretch reads STPPTTATSPS.

Belongs to the peptidase M67A family.

Functionally, acts as a regulatory subunit of the 26S proteasome which is involved in the ATP-dependent degradation of ubiquitinated proteins. In Dictyostelium discoideum (Social amoeba), this protein is 26S proteasome non-ATPase regulatory subunit 7 (psmD7).